A 95-amino-acid polypeptide reads, in one-letter code: Aspartyl/glutamyl-tRNA(Asn/Gln) amidotransferase subunit C (95 aa).

It belongs to the GatC family. In terms of assembly, heterotrimer of A, B and C subunits.

The catalysed reaction is L-glutamyl-tRNA(Gln) + L-glutamine + ATP + H2O = L-glutaminyl-tRNA(Gln) + L-glutamate + ADP + phosphate + H(+). The enzyme catalyses L-aspartyl-tRNA(Asn) + L-glutamine + ATP + H2O = L-asparaginyl-tRNA(Asn) + L-glutamate + ADP + phosphate + 2 H(+). Functionally, allows the formation of correctly charged Asn-tRNA(Asn) or Gln-tRNA(Gln) through the transamidation of misacylated Asp-tRNA(Asn) or Glu-tRNA(Gln) in organisms which lack either or both of asparaginyl-tRNA or glutaminyl-tRNA synthetases. The reaction takes place in the presence of glutamine and ATP through an activated phospho-Asp-tRNA(Asn) or phospho-Glu-tRNA(Gln). In Gluconacetobacter diazotrophicus (strain ATCC 49037 / DSM 5601 / CCUG 37298 / CIP 103539 / LMG 7603 / PAl5), this protein is Aspartyl/glutamyl-tRNA(Asn/Gln) amidotransferase subunit C.